A 44-amino-acid polypeptide reads, in one-letter code: Photosystem II reaction center protein K (44 aa).

Positions methionine 1–alanine 7 are excised as a propeptide. Residues phenylalanine 23–phenylalanine 43 traverse the membrane as a helical segment.

Belongs to the PsbK family. PSII is composed of 1 copy each of membrane proteins PsbA, PsbB, PsbC, PsbD, PsbE, PsbF, PsbH, PsbI, PsbJ, PsbK, PsbL, PsbM, PsbT, PsbX, PsbY, PsbZ, Psb30/Ycf12, at least 3 peripheral proteins of the oxygen-evolving complex and a large number of cofactors. It forms dimeric complexes.

Its subcellular location is the plastid. It localises to the chloroplast thylakoid membrane. Its function is as follows. One of the components of the core complex of photosystem II (PSII). PSII is a light-driven water:plastoquinone oxidoreductase that uses light energy to abstract electrons from H(2)O, generating O(2) and a proton gradient subsequently used for ATP formation. It consists of a core antenna complex that captures photons, and an electron transfer chain that converts photonic excitation into a charge separation. The protein is Photosystem II reaction center protein K of Thalassiosira pseudonana (Marine diatom).